Here is a 270-residue protein sequence, read N- to C-terminus: BPI fold-containing family A member 5 (270 aa).

A signal peptide spans 1–19 (MFLAGSFIVLCGLLAQSTA). Cys-196 and Cys-238 are oxidised to a cystine.

This sequence belongs to the BPI/LBP/Plunc superfamily. Plunc family. Expressed in interpapillar epithelium of the anterior part of the tongue.

It localises to the secreted. In terms of biological role, may play a role in innate immunity in the oral cavity. In Mus musculus (Mouse), this protein is BPI fold-containing family A member 5 (Bpifa5).